A 214-amino-acid chain; its full sequence is S-crystallin 1 (214 aa).

The GST N-terminal domain maps to 2–79 (PSYTLHYFNH…YLAREFGFHG (78 aa)). The region spanning 81–214 (NNMEMARVDF…YLQRRCRTDF (134 aa)) is the GST C-terminal domain.

Belongs to the GST superfamily. Lens.

In terms of biological role, S-crystallins are structural components of squids and octopi eye lens. Contains relatively little GST activity (1/1000 of that of mammalian GST enzyme). This Octopus vulgaris (Common octopus) protein is S-crystallin 1 (OCTS1).